Consider the following 421-residue polypeptide: Medium-chain specific acyl-CoA dehydrogenase, mitochondrial (421 aa).

Residues 1 to 25 (MAAGFGRCCRVLRSISRFQWRSQHT) constitute a mitochondrion transit peptide. Lys69 is subject to N6-acetyllysine; alternate. Lys69 bears the N6-succinyllysine; alternate mark. An FAD-binding site is contributed by 158 to 167 (YCVTEPGAGS). Position 167 (Ser167) interacts with octanoyl-CoA. Lys179 is subject to N6-succinyllysine. Residue 191–193 (WIT) participates in FAD binding. Lys212, Lys217, and Lys271 each carry N6-acetyllysine; alternate. Residues Lys212, Lys217, and Lys271 each carry the N6-succinyllysine; alternate modification. Asp278 lines the octanoyl-CoA pocket. N6-acetyllysine is present on Lys279. Arg281 contacts octanoyl-CoA. Residue Lys301 is modified to N6-acetyllysine. Residues 306–308 (RKT) and 316–317 (HQ) contribute to the FAD site. 2 residues coordinate octanoyl-CoA: Arg349 and Thr351. The residue at position 351 (Thr351) is a Phosphothreonine. 374–378 (QILGG) is an FAD binding site. An octanoyl-CoA-binding site is contributed by Glu401. The active-site Proton acceptor is Glu401. 402–405 (GTSQ) serves as a coordination point for FAD.

The protein belongs to the acyl-CoA dehydrogenase family. As to quaternary structure, homotetramer. Interacts with the heterodimeric electron transfer flavoprotein ETF. It depends on FAD as a cofactor. Acetylated. Could occur at proximity of the cofactor-binding sites and reduce the catalytic activity. Could be deacetylated by SIRT3.

The protein resides in the mitochondrion matrix. The catalysed reaction is a medium-chain 2,3-saturated fatty acyl-CoA + oxidized [electron-transfer flavoprotein] + H(+) = a medium-chain (2E)-enoyl-CoA + reduced [electron-transfer flavoprotein]. It carries out the reaction pentanoyl-CoA + oxidized [electron-transfer flavoprotein] + H(+) = (2E)-pentenoyl-CoA + reduced [electron-transfer flavoprotein]. It catalyses the reaction hexanoyl-CoA + oxidized [electron-transfer flavoprotein] + H(+) = (2E)-hexenoyl-CoA + reduced [electron-transfer flavoprotein]. The enzyme catalyses octanoyl-CoA + oxidized [electron-transfer flavoprotein] + H(+) = (2E)-octenoyl-CoA + reduced [electron-transfer flavoprotein]. The catalysed reaction is decanoyl-CoA + oxidized [electron-transfer flavoprotein] + H(+) = (2E)-decenoyl-CoA + reduced [electron-transfer flavoprotein]. It carries out the reaction dodecanoyl-CoA + oxidized [electron-transfer flavoprotein] + H(+) = (2E)-dodecenoyl-CoA + reduced [electron-transfer flavoprotein]. It catalyses the reaction tetradecanoyl-CoA + oxidized [electron-transfer flavoprotein] + H(+) = (2E)-tetradecenoyl-CoA + reduced [electron-transfer flavoprotein]. The enzyme catalyses oxidized [electron-transfer flavoprotein] + hexadecanoyl-CoA + H(+) = (2E)-hexadecenoyl-CoA + reduced [electron-transfer flavoprotein]. The protein operates within lipid metabolism; mitochondrial fatty acid beta-oxidation. In terms of biological role, medium-chain specific acyl-CoA dehydrogenase is one of the acyl-CoA dehydrogenases that catalyze the first step of mitochondrial fatty acid beta-oxidation, an aerobic process breaking down fatty acids into acetyl-CoA and allowing the production of energy from fats. The first step of fatty acid beta-oxidation consists in the removal of one hydrogen from C-2 and C-3 of the straight-chain fatty acyl-CoA thioester, resulting in the formation of trans-2-enoyl-CoA. Electron transfer flavoprotein (ETF) is the electron acceptor that transfers electrons to the main mitochondrial respiratory chain via ETF-ubiquinone oxidoreductase (ETF dehydrogenase). Among the different mitochondrial acyl-CoA dehydrogenases, medium-chain specific acyl-CoA dehydrogenase acts specifically on acyl-CoAs with saturated 6 to 12 carbons long primary chains. The protein is Medium-chain specific acyl-CoA dehydrogenase, mitochondrial of Pan troglodytes (Chimpanzee).